The sequence spans 251 residues: HTH-type transcriptional regulator UlaR (251 aa).

Positions E3–A58 constitute an HTH deoR-type domain. The H-T-H motif DNA-binding region spans V20–D39.

Its subcellular location is the cytoplasm. Its function is as follows. Represses ulaG and the ulaABCDEF operon. The protein is HTH-type transcriptional regulator UlaR of Shigella flexneri.